The chain runs to 516 residues: Probable serine/threonine-protein kinase ECU02_0550 (516 aa).

Residues Tyr4–Phe230 enclose the Protein kinase domain. ATP is bound by residues Ile10 to Val18 and Lys32. Residue Asp120 is the Proton acceptor of the active site.

This sequence belongs to the protein kinase superfamily. CAMK Ser/Thr protein kinase family.

The catalysed reaction is L-seryl-[protein] + ATP = O-phospho-L-seryl-[protein] + ADP + H(+). The enzyme catalyses L-threonyl-[protein] + ATP = O-phospho-L-threonyl-[protein] + ADP + H(+). The polypeptide is Probable serine/threonine-protein kinase ECU02_0550 (Encephalitozoon cuniculi (strain GB-M1) (Microsporidian parasite)).